Consider the following 141-residue polypeptide: ATP synthase epsilon chain, chloroplastic (141 aa).

Belongs to the ATPase epsilon chain family. As to quaternary structure, F-type ATPases have 2 components, F(1) - the catalytic core - and F(0) - the membrane proton channel. F(1) has five subunits: alpha(3), beta(3), gamma(1), delta(1), epsilon(1). F(0) has four main subunits: a(1), b(1), b'(1) and c(10-14). The alpha and beta chains form an alternating ring which encloses part of the gamma chain. F(1) is attached to F(0) by a central stalk formed by the gamma and epsilon chains, while a peripheral stalk is formed by the delta, b and b' chains.

The protein localises to the plastid. It is found in the chloroplast thylakoid membrane. Its function is as follows. F(1)F(0) ATP synthase produces ATP from ADP in the presence of a proton or sodium gradient. F-type ATPases consist of two structural domains, F(1) containing the extramembraneous catalytic core and F(0) containing the membrane proton channel, linked together by a central stalk and a peripheral stalk. During catalysis, ATP synthesis in the catalytic domain of F(1) is coupled via a rotary mechanism of the central stalk subunits to proton translocation. This Chlamydomonas reinhardtii (Chlamydomonas smithii) protein is ATP synthase epsilon chain, chloroplastic.